Here is a 536-residue protein sequence, read N- to C-terminus: CTP synthase (536 aa).

The tract at residues 1–267 is amidoligase domain; it reads MSKFVFVTGG…CKETLKYLDL (267 aa). A CTP-binding site is contributed by Ser13. Ser13 provides a ligand contact to UTP. Residues 14–19 and Asp71 contribute to the ATP site; that span reads SIGKGI. Residues Asp71 and Glu141 each contribute to the Mg(2+) site. Residues 148-150, 188-193, and Lys224 contribute to the CTP site; these read DIE and KTKPTQ. Residues 188 to 193 and Lys224 each bind UTP; that span reads KTKPTQ. One can recognise a Glutamine amidotransferase type-1 domain in the interval 292–534; the sequence is KVALVGKYIE…IKASQDKLTQ (243 aa). Gly354 is an L-glutamine binding site. Catalysis depends on Cys381, which acts as the Nucleophile; for glutamine hydrolysis. Residues 382-385, Glu405, and Arg462 each bind L-glutamine; that span reads LGMQ. Residues His507 and Glu509 contribute to the active site.

Belongs to the CTP synthase family. In terms of assembly, homotetramer.

It catalyses the reaction UTP + L-glutamine + ATP + H2O = CTP + L-glutamate + ADP + phosphate + 2 H(+). The catalysed reaction is L-glutamine + H2O = L-glutamate + NH4(+). It carries out the reaction UTP + NH4(+) + ATP = CTP + ADP + phosphate + 2 H(+). Its pathway is pyrimidine metabolism; CTP biosynthesis via de novo pathway; CTP from UDP: step 2/2. Allosterically activated by GTP, when glutamine is the substrate; GTP has no effect on the reaction when ammonia is the substrate. The allosteric effector GTP functions by stabilizing the protein conformation that binds the tetrahedral intermediate(s) formed during glutamine hydrolysis. Inhibited by the product CTP, via allosteric rather than competitive inhibition. Its function is as follows. Catalyzes the ATP-dependent amination of UTP to CTP with either L-glutamine or ammonia as the source of nitrogen. Regulates intracellular CTP levels through interactions with the four ribonucleotide triphosphates. This is CTP synthase from Prochlorococcus marinus (strain AS9601).